Here is a 131-residue protein sequence, read N- to C-terminus: Peptide methionine sulfoxide reductase MsrB (131 aa).

The region spanning 8 to 130 (LEEWKQMLDP…NSVCLDLVPR (123 aa)) is the MsrB domain. Zn(2+) contacts are provided by cysteine 47, cysteine 50, cysteine 96, and cysteine 99. Catalysis depends on cysteine 119, which acts as the Nucleophile.

The protein belongs to the MsrB Met sulfoxide reductase family. Zn(2+) serves as cofactor.

It carries out the reaction L-methionyl-[protein] + [thioredoxin]-disulfide + H2O = L-methionyl-(R)-S-oxide-[protein] + [thioredoxin]-dithiol. In Pseudomonas syringae pv. syringae (strain B728a), this protein is Peptide methionine sulfoxide reductase MsrB.